Reading from the N-terminus, the 703-residue chain is Calpain-8 (703 aa).

In terms of domain architecture, Calpain catalytic spans 45–344; that stretch reads LFKDPEFPAC…YSRLEICNLS (300 aa). Active-site residues include Cys-105, His-262, and Asn-286. The segment at 355–512 is domain III; the sequence is KWNLVLFNGR…VFSEKKAKAL (158 aa). The segment at 513-531 is linker; the sequence is EIGDTVSGHPHEPHPRDMD. EF-hand domains lie at 532 to 566, 575 to 608, 605 to 640, and 670 to 703; these read EEDE…VLSK, FNIN…LKIR, LKIR…AGFT, and IRLE…CVLV. The interval 532-703 is domain IV; sequence EEDEHVRSLF…LAEWLCCVLV (172 aa). 9 residues coordinate Ca(2+): Asp-588, Asp-590, Thr-592, Ser-594, Glu-599, Asp-618, Asn-620, Thr-624, and Glu-629.

Belongs to the peptidase C2 family. In terms of assembly, monomer and homooligomer. Interacts with COPS1/GPS1, COPB1, EYA2, NME2, NME4 and TOMM70. Ca(2+) serves as cofactor. Post-translationally, undergoes autolytic cleavage between Ala-5 and Ala-6 which gives rise to fragments extending from Ala-6 to the C-terminus, Ala-6 to the EF-hand 2 domain and from Ala-6 to the beginning of domain III. In terms of tissue distribution, predominantly expressed in the stomach. Localizes strictly to the surface mucus cells in the gastric epithelium and the mucus-secreting goblet cells in the duodenum. Detected in the pituitary after estrogen stimulation.

Its subcellular location is the cytoplasm. The protein localises to the golgi apparatus. It catalyses the reaction Broad endopeptidase specificity.. Calcium-regulated non-lysosomal thiol-protease. Involved in membrane trafficking in the gastric surface mucus cells (pit cells) and may involve the membrane trafficking of mucus cells via interactions with coat protein. Proteolytically cleaves the beta-subunit of coatomer complex. The protein is Calpain-8 (Capn8) of Rattus norvegicus (Rat).